The following is a 404-amino-acid chain: Cysteine desulfurase IscS (404 aa).

Pyridoxal 5'-phosphate is bound by residues 75–76 (AT), Asn155, Gln183, and 203–205 (SAH). At Lys206 the chain carries N6-(pyridoxal phosphate)lysine. Thr243 contacts pyridoxal 5'-phosphate. Residue Cys328 is the Cysteine persulfide intermediate of the active site. Cys328 serves as a coordination point for [2Fe-2S] cluster.

Belongs to the class-V pyridoxal-phosphate-dependent aminotransferase family. NifS/IscS subfamily. As to quaternary structure, homodimer. Forms a heterotetramer with IscU, interacts with other sulfur acceptors. It depends on pyridoxal 5'-phosphate as a cofactor.

It localises to the cytoplasm. The enzyme catalyses (sulfur carrier)-H + L-cysteine = (sulfur carrier)-SH + L-alanine. It participates in cofactor biosynthesis; iron-sulfur cluster biosynthesis. Master enzyme that delivers sulfur to a number of partners involved in Fe-S cluster assembly, tRNA modification or cofactor biosynthesis. Catalyzes the removal of elemental sulfur atoms from cysteine to produce alanine. Functions as a sulfur delivery protein for Fe-S cluster synthesis onto IscU, an Fe-S scaffold assembly protein, as well as other S acceptor proteins. The polypeptide is Cysteine desulfurase IscS (Buchnera aphidicola subsp. Baizongia pistaciae (strain Bp)).